Here is a 370-residue protein sequence, read N- to C-terminus: 3-dehydroquinate synthase (370 aa).

Residues 112–116, 136–137, lysine 149, lysine 158, and 176–179 each bind NAD(+); these read GVVGD, TS, and TLRT. Zn(2+) contacts are provided by glutamate 191, histidine 254, and histidine 276.

The protein belongs to the sugar phosphate cyclases superfamily. Dehydroquinate synthase family. It depends on NAD(+) as a cofactor. Requires Co(2+) as cofactor. Zn(2+) is required as a cofactor.

Its subcellular location is the cytoplasm. It catalyses the reaction 7-phospho-2-dehydro-3-deoxy-D-arabino-heptonate = 3-dehydroquinate + phosphate. Its pathway is metabolic intermediate biosynthesis; chorismate biosynthesis; chorismate from D-erythrose 4-phosphate and phosphoenolpyruvate: step 2/7. In terms of biological role, catalyzes the conversion of 3-deoxy-D-arabino-heptulosonate 7-phosphate (DAHP) to dehydroquinate (DHQ). This chain is 3-dehydroquinate synthase, found in Xanthomonas axonopodis pv. citri (strain 306).